Reading from the N-terminus, the 45-residue chain is Caltrin-like protein 1 (45 aa).

Positions 8-45 constitute a Kazal-like domain; the sequence is DSDRPNCSRYVQHLYMCTKELDPVCGTDGHTYGNRSIF. 2 N-linked (GlcNAc...) asparagine glycosylation sites follow: Asn-13 and Asn-41.

Post-translationally, glycosylated.

It localises to the secreted. In terms of biological role, inhibits calcium transport into spermatozoa. This Cavia porcellus (Guinea pig) protein is Caltrin-like protein 1.